Consider the following 225-residue polypeptide: Adenosylcobinamide-GDP ribazoletransferase (225 aa).

The next 5 helical transmembrane spans lie at 34-54 (FVGI…FWFL), 93-113 (NLGT…FYSF), 116-136 (VSAF…LLLL), 165-185 (PLLL…AITI), and 204-224 (VVGA…YFLA).

The protein belongs to the CobS family. Requires Mg(2+) as cofactor.

The protein localises to the cell membrane. The catalysed reaction is alpha-ribazole + adenosylcob(III)inamide-GDP = adenosylcob(III)alamin + GMP + H(+). It catalyses the reaction alpha-ribazole 5'-phosphate + adenosylcob(III)inamide-GDP = adenosylcob(III)alamin 5'-phosphate + GMP + H(+). It participates in cofactor biosynthesis; adenosylcobalamin biosynthesis; adenosylcobalamin from cob(II)yrinate a,c-diamide: step 7/7. Its function is as follows. Joins adenosylcobinamide-GDP and alpha-ribazole to generate adenosylcobalamin (Ado-cobalamin). Also synthesizes adenosylcobalamin 5'-phosphate from adenosylcobinamide-GDP and alpha-ribazole 5'-phosphate. This chain is Adenosylcobinamide-GDP ribazoletransferase (cobS1), found in Archaeoglobus fulgidus (strain ATCC 49558 / DSM 4304 / JCM 9628 / NBRC 100126 / VC-16).